Reading from the N-terminus, the 38-residue chain is uncharacterized protein (38 aa).

Residues 10 to 32 (FSLLWYFLVGGGKGEVCWRFLGI) traverse the membrane as a helical segment.

The protein localises to the membrane. This is an uncharacterized protein from Saccharomyces cerevisiae (strain ATCC 204508 / S288c) (Baker's yeast).